A 208-amino-acid polypeptide reads, in one-letter code: Ribonuclease HII (208 aa).

The 205-residue stretch at 1–205 folds into the RNase H type-2 domain; that stretch reads MIVVGIDEAG…LQEIAPNYYI (205 aa). Positions 7, 8, and 104 each coordinate a divalent metal cation.

The protein belongs to the RNase HII family. Requires Mn(2+) as cofactor. The cofactor is Mg(2+).

It is found in the cytoplasm. It catalyses the reaction Endonucleolytic cleavage to 5'-phosphomonoester.. In terms of biological role, endonuclease that specifically degrades the RNA of RNA-DNA hybrids. In Sulfurisphaera tokodaii (strain DSM 16993 / JCM 10545 / NBRC 100140 / 7) (Sulfolobus tokodaii), this protein is Ribonuclease HII.